We begin with the raw amino-acid sequence, 519 residues long: ATP synthase subunit alpha 1 (519 aa).

172–179 (GDRQTGKT) contacts ATP.

The protein belongs to the ATPase alpha/beta chains family. F-type ATPases have 2 components, CF(1) - the catalytic core - and CF(0) - the membrane proton channel. CF(1) has five subunits: alpha(3), beta(3), gamma(1), delta(1), epsilon(1). CF(0) has three main subunits: a(1), b(2) and c(9-12). The alpha and beta chains form an alternating ring which encloses part of the gamma chain. CF(1) is attached to CF(0) by a central stalk formed by the gamma and epsilon chains, while a peripheral stalk is formed by the delta and b chains.

Its subcellular location is the cell inner membrane. It carries out the reaction ATP + H2O + 4 H(+)(in) = ADP + phosphate + 5 H(+)(out). Functionally, produces ATP from ADP in the presence of a proton gradient across the membrane. The alpha chain is a regulatory subunit. This is ATP synthase subunit alpha 1 from Psychromonas ingrahamii (strain DSM 17664 / CCUG 51855 / 37).